Here is a 129-residue protein sequence, read N- to C-terminus: Arsenate-mycothiol transferase ArsC2 (129 aa).

It belongs to the low molecular weight phosphotyrosine protein phosphatase family.

The protein resides in the cytoplasm. The catalysed reaction is mycothiol + arsenate = arseno-mycothiol + H2O. Involved in defense against toxic arsenate. Involved in the mycothiol/myoredoxin redox pathway which uses a mycothioltransferase mechanism; facilitates adduct formation between arsenate and mycothiol. The protein is Arsenate-mycothiol transferase ArsC2 (arsC2) of Corynebacterium glutamicum (strain ATCC 13032 / K051).